The sequence spans 254 residues: Leucyl/phenylalanyl-tRNA--protein transferase (254 aa).

The protein belongs to the L/F-transferase family.

The protein resides in the cytoplasm. It carries out the reaction N-terminal L-lysyl-[protein] + L-leucyl-tRNA(Leu) = N-terminal L-leucyl-L-lysyl-[protein] + tRNA(Leu) + H(+). The catalysed reaction is N-terminal L-arginyl-[protein] + L-leucyl-tRNA(Leu) = N-terminal L-leucyl-L-arginyl-[protein] + tRNA(Leu) + H(+). The enzyme catalyses L-phenylalanyl-tRNA(Phe) + an N-terminal L-alpha-aminoacyl-[protein] = an N-terminal L-phenylalanyl-L-alpha-aminoacyl-[protein] + tRNA(Phe). Functionally, functions in the N-end rule pathway of protein degradation where it conjugates Leu, Phe and, less efficiently, Met from aminoacyl-tRNAs to the N-termini of proteins containing an N-terminal arginine or lysine. In Burkholderia lata (strain ATCC 17760 / DSM 23089 / LMG 22485 / NCIMB 9086 / R18194 / 383), this protein is Leucyl/phenylalanyl-tRNA--protein transferase.